Reading from the N-terminus, the 86-residue chain is Putative defensin-like protein 189 (86 aa).

The N-terminal stretch at 1-28 (MKMAKSANEIGFITCLVVFLVLTGQSNG) is a signal peptide. 4 cysteine pairs are disulfide-bonded: cysteine 39–cysteine 85, cysteine 52–cysteine 71, cysteine 57–cysteine 80, and cysteine 61–cysteine 82.

Belongs to the DEFL family.

It is found in the secreted. The sequence is that of Putative defensin-like protein 189 from Arabidopsis thaliana (Mouse-ear cress).